A 306-amino-acid polypeptide reads, in one-letter code: Aspartate carbamoyltransferase catalytic subunit (306 aa).

2 residues coordinate carbamoyl phosphate: Arg51 and Thr52. Residue Lys80 coordinates L-aspartate. Arg101, His129, and Gln132 together coordinate carbamoyl phosphate. Positions 162 and 224 each coordinate L-aspartate. Residues Leu263 and Pro264 each contribute to the carbamoyl phosphate site.

Belongs to the aspartate/ornithine carbamoyltransferase superfamily. ATCase family. As to quaternary structure, heterododecamer (2C3:3R2) of six catalytic PyrB chains organized as two trimers (C3), and six regulatory PyrI chains organized as three dimers (R2).

It catalyses the reaction carbamoyl phosphate + L-aspartate = N-carbamoyl-L-aspartate + phosphate + H(+). It functions in the pathway pyrimidine metabolism; UMP biosynthesis via de novo pathway; (S)-dihydroorotate from bicarbonate: step 2/3. Catalyzes the condensation of carbamoyl phosphate and aspartate to form carbamoyl aspartate and inorganic phosphate, the committed step in the de novo pyrimidine nucleotide biosynthesis pathway. The polypeptide is Aspartate carbamoyltransferase catalytic subunit (Parabacteroides distasonis (strain ATCC 8503 / DSM 20701 / CIP 104284 / JCM 5825 / NCTC 11152)).